A 55-amino-acid chain; its full sequence is U17-myrmicitoxin-Mri1b (55 aa).

Positions methionine 1 to serine 31 are cleaved as a signal peptide. Glutamine 32 carries the post-translational modification Pyrrolidone carboxylic acid.

In terms of processing, contains 1 disulfide bond. In terms of tissue distribution, expressed by the venom gland.

The protein localises to the secreted. The sequence is that of U17-myrmicitoxin-Mri1b from Manica rubida (European giant red ant).